A 206-amino-acid chain; its full sequence is Peroxynitrite isomerase (206 aa).

The short motif at 21 to 27 (GTWEGNG) is the GXWXGXG element. His190 contacts heme b.

It belongs to the nitrobindin family. In terms of assembly, homodimer. Heme b is required as a cofactor.

It catalyses the reaction peroxynitrite = nitrate. The protein operates within nitrogen metabolism. Functionally, heme-binding protein able to scavenge peroxynitrite and to protect free L-tyrosine against peroxynitrite-mediated nitration, by acting as a peroxynitrite isomerase that converts peroxynitrite to nitrate. Therefore, this protein likely plays a role in peroxynitrite sensing and in the detoxification of reactive nitrogen and oxygen species (RNS and ROS, respectively). Is able to bind nitric oxide (NO) in vitro, but may act as a sensor of peroxynitrite levels in vivo. The polypeptide is Peroxynitrite isomerase (Kocuria rhizophila (strain ATCC 9341 / DSM 348 / NBRC 103217 / DC2201)).